Here is a 273-residue protein sequence, read N- to C-terminus: Shikimate dehydrogenase (NADP(+)) (273 aa).

Shikimate contacts are provided by residues 15-17 and Thr62; that span reads SKS. Lys66 serves as the catalytic Proton acceptor. NADP(+) is bound at residue Asp78. Positions 87 and 103 each coordinate shikimate. Residues 127–131, 150–155, Ala218, and Gly238 each bind NADP(+); these read GAGGA and NRTHTR.

This sequence belongs to the shikimate dehydrogenase family. Homodimer.

It carries out the reaction shikimate + NADP(+) = 3-dehydroshikimate + NADPH + H(+). The protein operates within metabolic intermediate biosynthesis; chorismate biosynthesis; chorismate from D-erythrose 4-phosphate and phosphoenolpyruvate: step 4/7. Involved in the biosynthesis of the chorismate, which leads to the biosynthesis of aromatic amino acids. Catalyzes the reversible NADPH linked reduction of 3-dehydroshikimate (DHSA) to yield shikimate (SA). The chain is Shikimate dehydrogenase (NADP(+)) from Yersinia pseudotuberculosis serotype O:1b (strain IP 31758).